A 368-amino-acid polypeptide reads, in one-letter code: 2-aminoethylphosphonate--pyruvate transaminase (368 aa).

Residue Lys-192 is modified to N6-(pyridoxal phosphate)lysine.

This sequence belongs to the class-V pyridoxal-phosphate-dependent aminotransferase family. PhnW subfamily. Homodimer. It depends on pyridoxal 5'-phosphate as a cofactor.

It carries out the reaction (2-aminoethyl)phosphonate + pyruvate = phosphonoacetaldehyde + L-alanine. In terms of biological role, involved in phosphonate degradation. The protein is 2-aminoethylphosphonate--pyruvate transaminase of Pseudomonas putida (strain ATCC 47054 / DSM 6125 / CFBP 8728 / NCIMB 11950 / KT2440).